The chain runs to 91 residues: Small integral membrane protein 13 (91 aa).

Residues 10–30 (LVFVATLLIVLLLMVCGWYFV) traverse the membrane as a helical segment. The disordered stretch occupies residues 47-91 (DTGSQEGDHEPSGSETEEDTSSSPHRIRSARQRRAPADEGHRPLT). A phosphoserine mark is found at S58 and S60. T62 is modified (phosphothreonine). Position 69 is a phosphoserine (S69). Residues 71–80 (HRIRSARQRR) show a composition bias toward basic residues. The segment covering 81 to 91 (APADEGHRPLT) has biased composition (basic and acidic residues).

Belongs to the SMIM13 family.

Its subcellular location is the membrane. The protein is Small integral membrane protein 13 (SMIM13) of Homo sapiens (Human).